Reading from the N-terminus, the 276-residue chain is Potassium/proton antiporter CemA (276 aa).

3 consecutive transmembrane segments (helical) span residues 59–79, 199–219, and 236–256; these read LLLL…WIFG, FFII…GWEV, and FIFL…KYWI.

Belongs to the CemA family.

The protein resides in the plastid. The protein localises to the chloroplast inner membrane. It catalyses the reaction K(+)(in) + H(+)(out) = K(+)(out) + H(+)(in). Contributes to K(+)/H(+) antiport activity by supporting proton efflux to control proton extrusion and homeostasis in chloroplasts in a light-dependent manner to modulate photosynthesis. Prevents excessive induction of non-photochemical quenching (NPQ) under continuous-light conditions. Indirectly promotes efficient inorganic carbon uptake into chloroplasts. The sequence is that of Potassium/proton antiporter CemA from Cyanidioschyzon merolae (strain NIES-3377 / 10D) (Unicellular red alga).